The sequence spans 397 residues: MTAPGLTAAVEGIAHNKGELFASFDVDAFEVPHGRDEIWRFTPLRRLRGLHDGSARATGSATITVSERPGVYTQTVRRGDPRLGEGGVPTDRVAAQAFSSFNSATLVTVERDTQVVEPVGITVTGPGEGAVAYGHLQVRIEELGEAVVVIDHRGGGTYADNVEFVVDDAARLTAVWIADWADNTVHLSAHHARIGKDAVLRHVTVMLGGDVVRMSAGVRFCGAGGDAELLGLYFADDGQHLESRLLVDHAHPDCKSNVLYKGALQGDPASSLPDAHTVWVGDVLIRAQATGTDTFEVNRNLVLTDGARADSVPNLEIETGEIVGAGHASATGRFDDEQLFYLRSRGIPEAQARRLVVRGFFGEIIAKIAVPEVRERLTAAIEHELEITESTEKTTVS.

Thr2 carries the N-acetylthreonine modification.

The protein belongs to the iron-sulfur cluster assembly SufBD family.

This is Iron-sulfur cluster assembly SufBD family protein Rv1462 from Mycobacterium tuberculosis (strain ATCC 25618 / H37Rv).